The following is a 433-amino-acid chain: FAD-dependent monooxygenase notI' (433 aa).

2 residues coordinate FAD: Glu45 and Arg117. The active site involves Arg195. FAD contacts are provided by Asp314 and Ala327.

It belongs to the paxM FAD-dependent monooxygenase family. FAD is required as a cofactor.

Its pathway is alkaloid biosynthesis. Its function is as follows. FAD-dependent monooxygenase; part of the gene cluster that mediates the biosynthesis of notoamide, a fungal indole alkaloid that belongs to a family of natural products containing a characteristic bicyclo[2.2.2]diazaoctane core. The first step of notoamide biosynthesis involves coupling of L-proline and L-tryptophan by the bimodular NRPS notE', to produce cyclo-L-tryptophan-L-proline called brevianamide F. The reverse prenyltransferase notF' then acts as a deoxybrevianamide E synthase and converts brevianamide F to deoxybrevianamide E via reverse prenylation at C-2 of the indole ring leading to the bicyclo[2.2.2]diazaoctane core. Deoxybrevianamide E is further hydroxylated at C-6 of the indole ring, likely catalyzed by the cytochrome P450 monooxygenase notG', to yield 6-hydroxy-deoxybrevianamide E. 6-hydroxy-deoxybrevianamide E is a specific substrate of the prenyltransferase notC' for normal prenylation at C-7 to produce 6-hydroxy-7-prenyl-deoxybrevianamide, also called notoamide S. As the proposed pivotal branching point in notoamide biosynthesis, notoamide S can be diverted to notoamide E through an oxidative pyran ring closure putatively catalyzed by either notH' cytochrome P450 monooxygenase or the notD' FAD-linked oxidoreductase. This step would be followed by an indole 2,3-epoxidation-initiated pinacol-like rearrangement catalyzed by the notB' FAD-dependent monooxygenase leading to the formation of notoamide C and notoamide D. On the other hand notoamide S is converted to notoamide T by notH' (or notD'), a bifunctional oxidase that also functions as the intramolecular Diels-Alderase responsible for generation of (-)-notoamide T. To generate antipodal (+)-notoaminide T, notH (or notD) in Aspergillus strain MF297-2 is expected to catalyze a Diels-Alder reaction leading to the opposite stereochemistry. The remaining oxidoreductase notD' (or notH') likely catalyzes the oxidative pyran ring formation to yield (-)-stephacidin A. The FAD-dependent monooxygenase notI' is highly similar to notB' and is predicted to catalyze a similar conversion from (-)-stephacidin A to (+)-notoamide B via the 2,3-epoxidation of (-)-stephacidin A followed by a pinacol-type rearrangement. Finally, it remains unclear which enzyme could be responsible for the final hydroxylation steps leading to notoamide A and sclerotiamide. In Aspergillus versicolor, this protein is FAD-dependent monooxygenase notI'.